A 517-amino-acid chain; its full sequence is Keratin-associated protein 16-1 (517 aa).

Repeat copies occupy residues 73 to 77 (CCDPV), 93 to 97 (CCEAT), 128 to 132 (CCQPV), 153 to 157 (CCEPA), 168 to 172 (CCQPV), 198 to 202 (CCQPV), 208 to 212 (CCSAV), 228 to 232 (CCQPV), 248 to 252 (CCDPS), 283 to 287 (CCVQS), and 303 to 307 (CCVSS). Positions 73-307 (CCDPVICEPS…CQEPSCCVSS (235 aa)) are 11 X 5 AA repeats of C-C-X(3). Residues 483–517 (VSEEAPCQPTEAKPISPTTREAAAAQPAASKPANC) form a disordered region. Residues 504–517 (AAAAQPAASKPANC) show a composition bias toward low complexity.

Belongs to the KRTAP type 16 family.

The chain is Keratin-associated protein 16-1 (KRTAP16-1) from Homo sapiens (Human).